We begin with the raw amino-acid sequence, 222 residues long: Capsular polysaccharide type 8 biosynthesis protein cap8A (222 aa).

Transmembrane regions (helical) follow at residues 20–40 and 172–192; these read ILII…FFVL and VVNL…YIFF.

It belongs to the CpsC/CapA family.

Its subcellular location is the cell membrane. Required for the biosynthesis of type 8 capsular polysaccharide (Cap8/CP8). Might act as the chain-length regulator. This chain is Capsular polysaccharide type 8 biosynthesis protein cap8A (cap8A), found in Staphylococcus aureus.